Consider the following 360-residue polypeptide: DNA replication and repair protein RecF (360 aa).

30–37 serves as a coordination point for ATP; that stretch reads GQNGSGKT.

This sequence belongs to the RecF family.

Its subcellular location is the cytoplasm. In terms of biological role, the RecF protein is involved in DNA metabolism; it is required for DNA replication and normal SOS inducibility. RecF binds preferentially to single-stranded, linear DNA. It also seems to bind ATP. The protein is DNA replication and repair protein RecF of Shewanella putrefaciens (strain CN-32 / ATCC BAA-453).